We begin with the raw amino-acid sequence, 289 residues long: Acetyl-coenzyme A carboxylase carboxyl transferase subunit beta (289 aa).

Positions 34-289 (MWVKCNKCGE…KLINMHQNSF (256 aa)) constitute a CoA carboxyltransferase N-terminal domain. 4 residues coordinate Zn(2+): Cys38, Cys41, Cys57, and Cys60. Residues 38–60 (CNKCGEILYQNDLEKNYMVCNLC) form a C4-type zinc finger.

This sequence belongs to the AccD/PCCB family. Acetyl-CoA carboxylase is a heterohexamer composed of biotin carboxyl carrier protein (AccB), biotin carboxylase (AccC) and two subunits each of ACCase subunit alpha (AccA) and ACCase subunit beta (AccD). It depends on Zn(2+) as a cofactor.

Its subcellular location is the cytoplasm. It carries out the reaction N(6)-carboxybiotinyl-L-lysyl-[protein] + acetyl-CoA = N(6)-biotinyl-L-lysyl-[protein] + malonyl-CoA. It participates in lipid metabolism; malonyl-CoA biosynthesis; malonyl-CoA from acetyl-CoA: step 1/1. In terms of biological role, component of the acetyl coenzyme A carboxylase (ACC) complex. Biotin carboxylase (BC) catalyzes the carboxylation of biotin on its carrier protein (BCCP) and then the CO(2) group is transferred by the transcarboxylase to acetyl-CoA to form malonyl-CoA. In Clostridium botulinum (strain ATCC 19397 / Type A), this protein is Acetyl-coenzyme A carboxylase carboxyl transferase subunit beta.